A 344-amino-acid polypeptide reads, in one-letter code: tRNA N6-adenosine threonylcarbamoyltransferase (344 aa).

Fe cation contacts are provided by H111 and H115. Substrate is bound by residues 134-138, D167, G180, and N273; that span reads LVSGG. Fe cation is bound at residue D301.

This sequence belongs to the KAE1 / TsaD family. It depends on Fe(2+) as a cofactor.

It is found in the cytoplasm. The catalysed reaction is L-threonylcarbamoyladenylate + adenosine(37) in tRNA = N(6)-L-threonylcarbamoyladenosine(37) in tRNA + AMP + H(+). Required for the formation of a threonylcarbamoyl group on adenosine at position 37 (t(6)A37) in tRNAs that read codons beginning with adenine. Is involved in the transfer of the threonylcarbamoyl moiety of threonylcarbamoyl-AMP (TC-AMP) to the N6 group of A37, together with TsaE and TsaB. TsaD likely plays a direct catalytic role in this reaction. This Cupriavidus taiwanensis (strain DSM 17343 / BCRC 17206 / CCUG 44338 / CIP 107171 / LMG 19424 / R1) (Ralstonia taiwanensis (strain LMG 19424)) protein is tRNA N6-adenosine threonylcarbamoyltransferase.